A 415-amino-acid chain; its full sequence is Phakinin (415 aa).

Positions 1-26 (MSTRRVVVDAPAGASSSMPLQRHKAS) are disordered. Serine 2 carries the post-translational modification N-acetylserine. The head stretch occupies residues 2–114 (STRRVVVDAP…LGAVEDLGGC (113 aa)). Phosphoserine occurs at positions 26, 32, and 35. Threonine 53 is subject to Phosphothreonine. Phosphoserine occurs at positions 90 and 100. One can recognise an IF rod domain in the interval 104–415 (DLGAVEDLGG…HALLDREESS (312 aa)). Coiled-coil stretches lie at residues 115–144 (LVEY…ESKA), 199–248 (RKAA…VKML), and 295–395 (QAKQ…LSHK). Residues 396 to 415 (CQLQRDVASYHALLDREESS) form a tail region.

The protein belongs to the intermediate filament family. In terms of assembly, part of a complex required for lens intermediate filament formation composed of BFSP1, BFSP2 and CRYAA. Found in a complex composed of PPL (via C-terminal linker domain), BFSP1 and BFSP2 in the retinal lens. Within the complex interacts with PPL (via C-terminal linker domain) and with BFSP1. Identified in a complex that contains VIM, EZR, AHNAK, BFSP1, BFSP2, ANK2, PLEC, PRX and spectrin. Interacts with LGSN. Interacts with VIM. As to expression, abundantly expressed in both the inner and outer cortex of the retina, expressed at a lower level in the nucleus of the retina (at protein level). Detected in eye lens fiber cells (at protein level).

Its subcellular location is the cell membrane. It is found in the cytoplasm. The protein resides in the cytoskeleton. It localises to the cell cortex. Required for the correct formation of lens intermediate filaments as part of a complex composed of BFSP1, BFSP2 and CRYAA. Plays a role in maintenance of retinal lens optical clarity. The chain is Phakinin (BFSP2) from Bos taurus (Bovine).